Reading from the N-terminus, the 341-residue chain is Porin-like protein L (341 aa).

Residues 1–21 (MNKKLIALAVAAASISSVATA) form the signal peptide.

The protein belongs to the Gram-negative porin family. In terms of assembly, homotrimer.

The protein resides in the cell outer membrane. In terms of biological role, forms pores that allow passive diffusion of small molecules across the outer membrane. In Photobacterium profundum (strain SS9), this protein is Porin-like protein L (ompL).